Reading from the N-terminus, the 171-residue chain is Small ribosomal subunit protein uS13 (171 aa).

Over residues 1-11 (MAKGSANNVKV) the composition is skewed to polar residues. Disordered stretches follow at residues 1 to 24 (MAKG…EKKE) and 144 to 164 (EKGK…GLSI). Positions 144–158 (EKGKKVRGQRTRSNG) are enriched in basic residues.

This sequence belongs to the universal ribosomal protein uS13 family. As to quaternary structure, part of the 30S ribosomal subunit. Forms a loose heterodimer with protein S19. Forms two bridges to the 50S subunit in the 70S ribosome.

In terms of biological role, located at the top of the head of the 30S subunit, it contacts several helices of the 16S rRNA. In the 70S ribosome it contacts the 23S rRNA (bridge B1a) and protein L5 of the 50S subunit (bridge B1b), connecting the 2 subunits; these bridges are implicated in subunit movement. This chain is Small ribosomal subunit protein uS13, found in Thermoplasma acidophilum (strain ATCC 25905 / DSM 1728 / JCM 9062 / NBRC 15155 / AMRC-C165).